Reading from the N-terminus, the 184-residue chain is Endothelial cell-specific molecule 1 (184 aa).

An N-terminal signal peptide occupies residues 1–21; the sequence is MKSLLLLTTLLVPLHLGMAWS. Residues 24 to 102 form the IGFBP N-terminal domain; that stretch reads YAVDCPEHCD…GDEFGICKDC (79 aa). 6 disulfide bridges follow: Cys-28–Cys-51, Cys-32–Cys-53, Cys-37–Cys-54, Cys-43–Cys-57, Cys-65–Cys-83, and Cys-77–Cys-99. Positions 145–184 are disordered; that stretch reads RTSASHTERDSASGDGNAVREEIGEGNAARPSVMKWLNPR. Positions 150–167 are enriched in basic and acidic residues; it reads HTERDSASGDGNAVREEI. An O-linked (Xyl...) (chondroitin sulfate) serine glycan is attached at Ser-157.

Post-translationally, O-glycosylated; contains chondroitin sulfate and dermatan sulfate.

It localises to the secreted. Functionally, involved in angiogenesis; promotes angiogenic sprouting. May have potent implications in lung endothelial cell-leukocyte interactions. This Mus musculus (Mouse) protein is Endothelial cell-specific molecule 1 (Esm1).